We begin with the raw amino-acid sequence, 166 residues long: MSTNRPAHAKKAEIVAEIVSKIQSAQGVAIAEYKHLTVEQMSNLRRQALKQGIEVKIYKDSLVRRAVEELNLTELNEYLTQQNVFVFSNDDAIGAAKLVANFAKENEALKLKAGVYEGAAMDTAAIMEVATLPSKEDLYSMFASSLLYPLRQVMAVINAVADTKQD.

It belongs to the universal ribosomal protein uL10 family. In terms of assembly, part of the ribosomal stalk of the 50S ribosomal subunit. The N-terminus interacts with L11 and the large rRNA to form the base of the stalk. The C-terminus forms an elongated spine to which L12 dimers bind in a sequential fashion forming a multimeric L10(L12)X complex.

Its function is as follows. Forms part of the ribosomal stalk, playing a central role in the interaction of the ribosome with GTP-bound translation factors. This Mesoplasma florum (strain ATCC 33453 / NBRC 100688 / NCTC 11704 / L1) (Acholeplasma florum) protein is Large ribosomal subunit protein uL10.